Reading from the N-terminus, the 367-residue chain is Peptide chain release factor 2 (367 aa).

An N5-methylglutamine modification is found at Gln249.

It belongs to the prokaryotic/mitochondrial release factor family. In terms of processing, methylated by PrmC. Methylation increases the termination efficiency of RF2.

It localises to the cytoplasm. Peptide chain release factor 2 directs the termination of translation in response to the peptide chain termination codons UGA and UAA. In Thermotoga sp. (strain RQ2), this protein is Peptide chain release factor 2.